Consider the following 626-residue polypeptide: Ankyrin repeat domain-containing protein 55 (626 aa).

9 ANK repeats span residues 25-54 (VDLA…SILE), 59-88 (EGCT…NINT), 92-124 (YGRT…IPDK), 125-156 (NGRL…EINH), 160-189 (EGMT…DPTL), 193-222 (DFKT…GPSI), 229-259 (SGKT…NLQA), 263-292 (DDRT…DSNL), and 296-325 (NEST…AEPA). Positions 354-372 (KEEQKAHQKDQSRARPKEE) are enriched in basic and acidic residues. 3 disordered regions span residues 354 to 377 (KEEQ…TSEV), 455 to 491 (HAGL…SLEN), and 522 to 626 (QPGH…HDEN). At Ser-474 the chain carries Phosphoserine. A compositionally biased stretch (basic and acidic residues) spans 604–614 (QRGHDPPRAEE). The segment covering 616-626 (GGSSSPTHDEN) has biased composition (polar residues).

In Mus musculus (Mouse), this protein is Ankyrin repeat domain-containing protein 55 (Ankrd55).